Reading from the N-terminus, the 198-residue chain is Glycerol-3-phosphate acyltransferase (198 aa).

Transmembrane regions (helical) follow at residues 3–23 (VEWL…AVIV), 81–101 (LFAA…FFQF), 113–133 (VLLG…IGVA), and 153–175 (YVWL…MLLV).

This sequence belongs to the PlsY family. As to quaternary structure, probably interacts with PlsX.

The protein resides in the cell inner membrane. It carries out the reaction an acyl phosphate + sn-glycerol 3-phosphate = a 1-acyl-sn-glycero-3-phosphate + phosphate. It functions in the pathway lipid metabolism; phospholipid metabolism. Its function is as follows. Catalyzes the transfer of an acyl group from acyl-phosphate (acyl-PO(4)) to glycerol-3-phosphate (G3P) to form lysophosphatidic acid (LPA). This enzyme utilizes acyl-phosphate as fatty acyl donor, but not acyl-CoA or acyl-ACP. The polypeptide is Glycerol-3-phosphate acyltransferase (Methylococcus capsulatus (strain ATCC 33009 / NCIMB 11132 / Bath)).